A 198-amino-acid polypeptide reads, in one-letter code: COMM domain-containing protein 9 (198 aa).

Residue alanine 2 is modified to N-acetylalanine. The 75-residue stretch at 122–196 folds into the COMM domain; the sequence is RLVDLDWRVD…RIRDQLSAVA (75 aa).

This sequence belongs to the COMM domain-containing protein 9 family. In terms of assembly, component of the commander complex consisting of the CCC subcomplex and the retriever subcomplex. Component of the CCC (COMMD/CCDC22/CCDC93) subcomplex consisting of COMMD1, COMMD2, COMMD3, COMMD4, COMMD5, COMMD6, COMMD7, COMMD8, COMMD9, COMMD10, CCDC22 and CCDC93; within the complex forms a heterodimer with COMMD7. Interacts with RELB and NFKB1/p105. Interacts with CCDC22, CCDC93, SCNN1B, CUL1. As to expression, ubiquitous.

Its subcellular location is the nucleus. It localises to the cytoplasmic vesicle. In terms of biological role, scaffold protein in the commander complex that is essential for endosomal recycling of transmembrane cargos; the commander complex is composed of the CCC subcomplex and the retriever subcomplex. May modulate activity of cullin-RING E3 ubiquitin ligase (CRL) complexes. May down-regulate activation of NF-kappa-B. Modulates Na(+) transport in epithelial cells by regulation of apical cell surface expression of amiloride-sensitive sodium channel (ENaC) subunits. This chain is COMM domain-containing protein 9 (COMMD9), found in Homo sapiens (Human).